A 269-amino-acid polypeptide reads, in one-letter code: Energy-coupling factor transporter ATP-binding protein EcfA1 (269 aa).

Residues 8–242 (IVFKNVSFQY…AEELTRIGLD (235 aa)) form the ABC transporter domain. Residue 42–49 (GHNGSGKS) coordinates ATP.

Belongs to the ABC transporter superfamily. Energy-coupling factor EcfA family. Forms a stable energy-coupling factor (ECF) transporter complex composed of 2 membrane-embedded substrate-binding proteins (S component), 2 ATP-binding proteins (A component) and 2 transmembrane proteins (T component).

Its subcellular location is the cell membrane. In terms of biological role, ATP-binding (A) component of a common energy-coupling factor (ECF) ABC-transporter complex. Unlike classic ABC transporters this ECF transporter provides the energy necessary to transport a number of different substrates. This is Energy-coupling factor transporter ATP-binding protein EcfA1 from Staphylococcus aureus (strain USA300).